The primary structure comprises 140 residues: Large ribosomal subunit protein uL14 (140 aa).

It belongs to the universal ribosomal protein uL14 family.

The protein is Large ribosomal subunit protein uL14 (RpL23-A) of Aedes aegypti (Yellowfever mosquito).